The sequence spans 117 residues: Large ribosomal subunit protein bL31B (117 aa).

The disordered stretch occupies residues 75–117 (KRFERKKEASPADTPPESDSTTENASVEKKAEKKRVTAKGSKK). A compositionally biased stretch (basic and acidic residues) spans 100 to 109 (SVEKKAEKKR).

Belongs to the bacterial ribosomal protein bL31 family. Type B subfamily. As to quaternary structure, part of the 50S ribosomal subunit.

This Protochlamydia amoebophila (strain UWE25) protein is Large ribosomal subunit protein bL31B.